We begin with the raw amino-acid sequence, 446 residues long: Enolase 1 (446 aa).

Histidine 164 and glutamate 173 together coordinate substrate. The active-site Proton donor is the glutamate 216. Mg(2+) contacts are provided by aspartate 251, glutamate 302, and aspartate 329. 2 residues coordinate substrate: glutamate 302 and aspartate 329. Lysine 354 acts as the Proton acceptor in catalysis. Residues 381 to 384 and lysine 405 each bind substrate; that span reads SHRS.

This sequence belongs to the enolase family. As to quaternary structure, homodimer. It depends on Mg(2+) as a cofactor.

It is found in the cytoplasm. The catalysed reaction is (2R)-2-phosphoglycerate = phosphoenolpyruvate + H2O. The protein operates within carbohydrate degradation; glycolysis; pyruvate from D-glyceraldehyde 3-phosphate: step 4/5. This Zea mays (Maize) protein is Enolase 1 (ENO1).